The sequence spans 103 residues: Large ribosomal subunit protein eL14 (103 aa).

This sequence belongs to the eukaryotic ribosomal protein eL14 family.

This chain is Large ribosomal subunit protein eL14, found in Pyrobaculum calidifontis (strain DSM 21063 / JCM 11548 / VA1).